Reading from the N-terminus, the 467-residue chain is Serine/threonine-protein kinase SSN3 (467 aa).

2 stretches are compositionally biased toward polar residues: residues Met1–Arg12 and Gly29–Ser39. The tract at residues Met1–Asn45 is disordered. The Protein kinase domain maps to Tyr79 to Phe408. ATP-binding positions include Ile85 to Val93 and Lys109. Asp211 acts as the Proton acceptor in catalysis. The segment at Tyr426–Met467 is disordered.

The protein belongs to the protein kinase superfamily. CMGC Ser/Thr protein kinase family. CDC2/CDKX subfamily. As to quaternary structure, component of the SRB8-11 complex, a regulatory module of the Mediator complex. Requires Mg(2+) as cofactor.

It is found in the nucleus. It carries out the reaction L-seryl-[protein] + ATP = O-phospho-L-seryl-[protein] + ADP + H(+). The enzyme catalyses L-threonyl-[protein] + ATP = O-phospho-L-threonyl-[protein] + ADP + H(+). It catalyses the reaction [DNA-directed RNA polymerase] + ATP = phospho-[DNA-directed RNA polymerase] + ADP + H(+). Its function is as follows. Component of the SRB8-11 complex. The SRB8-11 complex is a regulatory module of the Mediator complex which is itself involved in regulation of basal and activated RNA polymerase II-dependent transcription. The SRB8-11 complex may be involved in the transcriptional repression of a subset of genes regulated by Mediator. It may inhibit the association of the Mediator complex with RNA polymerase II to form the holoenzyme complex. The SRB8-11 complex phosphorylates the C-terminal domain (CTD) of the largest subunit of RNA polymerase II. The polypeptide is Serine/threonine-protein kinase SSN3 (SSN3) (Coccidioides immitis (strain RS) (Valley fever fungus)).